Consider the following 230-residue polypeptide: Orotidine 5'-phosphate decarboxylase (230 aa).

Residues Asp11, Lys34, 61 to 70, Thr117, Arg179, Gln188, Gly208, and Arg209 each bind substrate; that span reads DLKLHDIPNT. Lys63 (proton donor) is an active-site residue.

Belongs to the OMP decarboxylase family. Type 1 subfamily. As to quaternary structure, homodimer.

It carries out the reaction orotidine 5'-phosphate + H(+) = UMP + CO2. Its pathway is pyrimidine metabolism; UMP biosynthesis via de novo pathway; UMP from orotate: step 2/2. Functionally, catalyzes the decarboxylation of orotidine 5'-monophosphate (OMP) to uridine 5'-monophosphate (UMP). The sequence is that of Orotidine 5'-phosphate decarboxylase from Streptococcus uberis (strain ATCC BAA-854 / 0140J).